Consider the following 201-residue polypeptide: Recombination protein RecR (201 aa).

The segment at 57 to 72 adopts a C4-type zinc-finger fold; the sequence is CRDCRTFTEQEVCTIC. Residues 81 to 176 enclose the Toprim domain; it reads GQICVVESPA…LASRIAHGVP (96 aa).

It belongs to the RecR family.

May play a role in DNA repair. It seems to be involved in an RecBC-independent recombinational process of DNA repair. It may act with RecF and RecO. The chain is Recombination protein RecR from Edwardsiella ictaluri (strain 93-146).